The following is a 379-amino-acid chain: Reducing end xylose-releasing exo-oligoxylanase (379 aa).

The active-site Proton donor is the Glu66. The active-site Proton acceptor is Asp259.

It belongs to the glycosyl hydrolase 8 (cellulase D) family.

The enzyme catalyses Hydrolysis of (1-&gt;4)-beta-D-xylose residues from the reducing end of oligosaccharides.. Functionally, hydrolyzes xylooligosaccharides with a degree of polymerization of greater than or equal to 3, releasing xylose from the reducing end. Has low activity on birchwood xylan, oat spelt xylan and arabinoxylan. The protein is Reducing end xylose-releasing exo-oligoxylanase of Bifidobacterium adolescentis (strain ATCC 15703 / DSM 20083 / NCTC 11814 / E194a).